Here is a 300-residue protein sequence, read N- to C-terminus: GTPase Era (300 aa).

The Era-type G domain maps to 6–173; the sequence is HSGFVAILGR…IESLVNTLPE (168 aa). Positions 14–21 are G1; the sequence is GRPNVGKS. Residue 14-21 participates in GTP binding; sequence GRPNVGKS. Residues 40–44 form a G2 region; sequence QTTRN. Residues 61–64 form a G3 region; the sequence is DTPG. GTP is bound by residues 61–65 and 123–126; these read DTPGI and NKID. The G4 stretch occupies residues 123–126; it reads NKID. Residues 152–154 form a G5 region; the sequence is ISA. One can recognise a KH type-2 domain in the interval 204–281; it reads TREEVPHSVA…YLELWVKVQP (78 aa).

The protein belongs to the TRAFAC class TrmE-Era-EngA-EngB-Septin-like GTPase superfamily. Era GTPase family. In terms of assembly, monomer.

The protein resides in the cytoplasm. The protein localises to the cell membrane. In terms of biological role, an essential GTPase that binds both GDP and GTP, with rapid nucleotide exchange. Plays a role in 16S rRNA processing and 30S ribosomal subunit biogenesis and possibly also in cell cycle regulation and energy metabolism. The protein is GTPase Era of Ligilactobacillus salivarius (strain UCC118) (Lactobacillus salivarius).